The following is a 272-amino-acid chain: Indole-3-glycerol phosphate synthase (272 aa).

It belongs to the TrpC family.

It catalyses the reaction 1-(2-carboxyphenylamino)-1-deoxy-D-ribulose 5-phosphate + H(+) = (1S,2R)-1-C-(indol-3-yl)glycerol 3-phosphate + CO2 + H2O. The protein operates within amino-acid biosynthesis; L-tryptophan biosynthesis; L-tryptophan from chorismate: step 4/5. This Mycobacteroides abscessus (strain ATCC 19977 / DSM 44196 / CCUG 20993 / CIP 104536 / JCM 13569 / NCTC 13031 / TMC 1543 / L948) (Mycobacterium abscessus) protein is Indole-3-glycerol phosphate synthase.